Consider the following 102-residue polypeptide: Protein translation factor SUI1 homolog (102 aa).

It belongs to the SUI1 family.

The chain is Protein translation factor SUI1 homolog from Methanosarcina mazei (strain ATCC BAA-159 / DSM 3647 / Goe1 / Go1 / JCM 11833 / OCM 88) (Methanosarcina frisia).